Reading from the N-terminus, the 479-residue chain is Flotillin-like protein 3 (479 aa).

Cysteine 36 carries S-palmitoyl cysteine lipidation. Coiled-coil stretches lie at residues 227-251 and 306-326; these read KVKTEVKVFQNEKEALVAKADAALA and EYETKVQEANWELYNKQKQAE.

It belongs to the band 7/mec-2 family. Flotillin subfamily. May be palmitoylated.

The protein localises to the cell membrane. It localises to the membrane. Its subcellular location is the caveola. Its function is as follows. May act as a scaffolding protein within caveolar membranes, functionally participating in formation of caveolae or caveolae-like vesicles. The chain is Flotillin-like protein 3 (FLOT3) from Arabidopsis thaliana (Mouse-ear cress).